A 282-amino-acid chain; its full sequence is Fibrinogen-like protein A (282 aa).

An N-terminal signal peptide occupies residues methionine 1–serine 24. A Fibrinogen C-terminal domain is found at serine 61–serine 281. 2 disulfides stabilise this stretch: cysteine 70–cysteine 101 and cysteine 224–cysteine 240.

This is Fibrinogen-like protein A from Apostichopus parvimensis (Warty sea cucumber).